The chain runs to 176 residues: NADH-quinone oxidoreductase subunit I (176 aa).

4Fe-4S ferredoxin-type domains follow at residues leucine 47–alanine 77 and alanine 87–glutamate 116. Positions 57, 60, 63, 67, 96, 99, 102, and 106 each coordinate [4Fe-4S] cluster.

This sequence belongs to the complex I 23 kDa subunit family. NDH-1 is composed of 14 different subunits. Subunits NuoA, H, J, K, L, M, N constitute the membrane sector of the complex. [4Fe-4S] cluster is required as a cofactor.

It is found in the cell inner membrane. It catalyses the reaction a quinone + NADH + 5 H(+)(in) = a quinol + NAD(+) + 4 H(+)(out). In terms of biological role, NDH-1 shuttles electrons from NADH, via FMN and iron-sulfur (Fe-S) centers, to quinones in the respiratory chain. The immediate electron acceptor for the enzyme in this species is believed to be ubiquinone. Couples the redox reaction to proton translocation (for every two electrons transferred, four hydrogen ions are translocated across the cytoplasmic membrane), and thus conserves the redox energy in a proton gradient. This is NADH-quinone oxidoreductase subunit I from Syntrophotalea carbinolica (strain DSM 2380 / NBRC 103641 / GraBd1) (Pelobacter carbinolicus).